Reading from the N-terminus, the 1090-residue chain is MLRYTRNALVLGSLVLLSGCDNGSSSSSSGNPDTPDNQDVVVRLPDVAVPGEAVTAVENQAVIHLVDIAGITSSSAADYSSKNLYLWNNETCDALSAPVADWNDVSTTPSGSDKYGPYWVIPLNKESGCINVIVRDGTDKLIDSDLRVAFGDFTDRTVSVIAGNSAVYDSRADAFRAAFGVALAEAHWVDKNTLLWPGGQDKPIVRLYYSHSSKVAADGEGKFTDRYLKLTPTTVSQQVSMRFPHLSSYAAFKLPDNANVDELLQGETVAIAAAEDGILISATQVQTAGVLDDAYAEAAEALSYGAQLADGGVTFRVWAPTAQQVDVVVYSADKKVIGSHPMTRDSASGAWSWQGGSDLKGAFYRYAMTVYHPQSRKVEQYEVTDPYAHSLSTNSEYSQVVDLNDSALKPDGWDNLTMPHAQKTKADLAKMTIHESHIRDLSAWDQTVPAELRGKYLALTAGDSNMVQHLKTLSASGVTHVELLPVFDLATVNEFSDKVADIQQPFSRLCEVNSAVKSSEFAGYCDSGSTVEEVLNQLKQSDSQDNPQVQALNTLVAQTDSYNWGYDPFHYTVPEGSYATDPEGTTRIKEFRTMIQAIKQDLGMNVIMDVVYNHTNAAGPTDRTSVLDKIVPWYYQRLNETTGSVESATCCSDSAPEHRMFAKLIADSLAVWTTDYKIDGFRFDLMGYHPKAQILSAWERIKALNPDIYFFGEGWDSNQSDRFEIASQINLKGTGIGTFSDRLRDSVRGGGPFDSGDALRQNQGIGSGAGVLPNELASLSDDQVRHLADLTRLGMAGNLADFVMIDKDGAAKKGSEIDYNGAPGGYAADPTEVVNYVSKHDNQTLWDMISYKASQEADLATRVRMQAVSLATVMLGQGIAFDQQGSELLRSKSFTRDSYDSGDWFNRVDYSLQDNNYNVGMPRISDDGSNYEVITRVKEMVATPGEAELKQMTAFYQELTELRKSSPLFTLGDGSAVMKRVDFRNTGSDQQAGLLVMTVDDGMKAGASLDSRLDGLVVAINAAPESRTLNEFAGETLQLSAIQQTAGENSLANGVQIAADGTVTLPAWSVAVLELPQGEAQGAGLPVSSK.

Positions 1–19 (MLRYTRNALVLGSLVLLSG) are cleaved as a signal peptide. The N-palmitoyl cysteine moiety is linked to residue Cys20. Cys20 carries the S-diacylglycerol cysteine lipid modification. The active-site Nucleophile is the Asp684. Residue Glu713 is the Proton donor of the active site.

Belongs to the glycosyl hydrolase 13 family. In terms of assembly, homotrimer.

The protein localises to the cell membrane. It catalyses the reaction Hydrolysis of (1-&gt;6)-alpha-D-glucosidic linkages in pullulan, amylopectin and glycogen, and in the alpha- and beta-limit dextrins of amylopectin and glycogen.. The chain is Pullulanase (pulA) from Klebsiella pneumoniae.